The following is a 224-amino-acid chain: 7-cyano-7-deazaguanine synthase (224 aa).

Residue 9 to 19 (ISGGMDSTLCA) coordinates ATP. Zn(2+)-binding residues include Cys190, Cys198, Cys201, and Cys204.

It belongs to the QueC family. It depends on Zn(2+) as a cofactor.

The catalysed reaction is 7-carboxy-7-deazaguanine + NH4(+) + ATP = 7-cyano-7-deazaguanine + ADP + phosphate + H2O + H(+). It participates in purine metabolism; 7-cyano-7-deazaguanine biosynthesis. Functionally, catalyzes the ATP-dependent conversion of 7-carboxy-7-deazaguanine (CDG) to 7-cyano-7-deazaguanine (preQ(0)). The sequence is that of 7-cyano-7-deazaguanine synthase from Campylobacter jejuni subsp. jejuni serotype O:6 (strain 81116 / NCTC 11828).